Consider the following 367-residue polypeptide: Alanine racemase (367 aa).

Catalysis depends on K35, which acts as the Proton acceptor; specific for D-alanine. At K35 the chain carries N6-(pyridoxal phosphate)lysine. A substrate-binding site is contributed by R130. Y258 serves as the catalytic Proton acceptor; specific for L-alanine. M306 is a binding site for substrate.

The protein belongs to the alanine racemase family. The cofactor is pyridoxal 5'-phosphate.

The enzyme catalyses L-alanine = D-alanine. It participates in amino-acid biosynthesis; D-alanine biosynthesis; D-alanine from L-alanine: step 1/1. In terms of biological role, catalyzes the interconversion of L-alanine and D-alanine. May also act on other amino acids. The chain is Alanine racemase (alr) from Acinetobacter baumannii (strain SDF).